Here is a 382-residue protein sequence, read N- to C-terminus: UDP-N-acetylenolpyruvoylglucosamine reductase (382 aa).

Positions 50–253 (RVGGPAVLAE…REAVLRLRAS (204 aa)) constitute an FAD-binding PCMH-type domain. The active site involves Arg-193. The active-site Proton donor is the Ser-270. Glu-374 is an active-site residue.

The protein belongs to the MurB family. Requires FAD as cofactor.

It localises to the cytoplasm. It carries out the reaction UDP-N-acetyl-alpha-D-muramate + NADP(+) = UDP-N-acetyl-3-O-(1-carboxyvinyl)-alpha-D-glucosamine + NADPH + H(+). Its pathway is cell wall biogenesis; peptidoglycan biosynthesis. Cell wall formation. This chain is UDP-N-acetylenolpyruvoylglucosamine reductase, found in Nocardia farcinica (strain IFM 10152).